The sequence spans 204 residues: MGAYKYMQEIYRKKQSDVMRFLLRIRAWQYRHLNKLHRAPRPTRPEKARRLGYKAKQGFVIYRIRIRRGGRKRPVPKGATYGKPKSHGVNQLKPTRNLQSLAEERTGRRLGGLRVLNSYWVAQDSTYKYFEVILVDIRHNVIRKSGSLNWICKHTQKHREMRGKTSAGRKHRGLGRGFHYSQTKGGSRRSCWLRHNTLSLRRKR.

Disordered stretches follow at residues 71–91 (RKRP…GVNQ) and 159–182 (REMR…HYSQ). The span at 159 to 174 (REMRGKTSAGRKHRGL) shows a compositional bias: basic residues.

It belongs to the eukaryotic ribosomal protein eL15 family.

The polypeptide is Large ribosomal subunit protein eL15 (RPL15) (Faxonius limosus (Spinycheek crayfish)).